Consider the following 166-residue polypeptide: Orotate phosphoribosyltransferase (166 aa).

5-phospho-alpha-D-ribose 1-diphosphate is bound by residues R83, K84, R86, H88, and E108–S116. Orotate-binding residues include T112 and R140.

The protein belongs to the purine/pyrimidine phosphoribosyltransferase family. PyrE subfamily. Homodimer. Mg(2+) is required as a cofactor.

It catalyses the reaction orotidine 5'-phosphate + diphosphate = orotate + 5-phospho-alpha-D-ribose 1-diphosphate. The protein operates within pyrimidine metabolism; UMP biosynthesis via de novo pathway; UMP from orotate: step 1/2. In terms of biological role, catalyzes the transfer of a ribosyl phosphate group from 5-phosphoribose 1-diphosphate to orotate, leading to the formation of orotidine monophosphate (OMP). The sequence is that of Orotate phosphoribosyltransferase from Thermoplasma volcanium (strain ATCC 51530 / DSM 4299 / JCM 9571 / NBRC 15438 / GSS1).